Here is a 736-residue protein sequence, read N- to C-terminus: Sulfate transporter (736 aa).

Positions 1–28 (MSSESKEPHVLSPKDSFEGNDRYSPPSR) are disordered. 2 positions are modified to phosphoserine: S12 and S16. A run of 2 helical transmembrane segments spans residues 114-134 (VMSGLIVGILLVPQSIAYSLL) and 139-159 (PIYGLYTSFFASLIYFLLGTS). N-linked (GlcNAc...) asparagine glycosylation is found at N201 and N207. Transmembrane regions (helical) follow at residues 229-249 (FLAGIYQVAMGFFQVGFVSVY), 257-277 (GFVTGASFTILTSQAKYLLGL), 380-400 (LIPSVAVDAIAISIIGFAITV), 422-442 (AIGFCNIIPSFFHCFTTSAAL), 457-477 (LSGVMTALVLLLVLLVIAPLF), and 526-546 (LISTELGLLIGVCFSMFCVIL). Residues 570 to 721 (AYKNLQARPG…YSVYEAMAFA (152 aa)) form the STAS domain.

The protein belongs to the SLC26A/SulP transporter (TC 2.A.53) family. Post-translationally, N-glycosylated.

The protein resides in the cell membrane. It localises to the apical cell membrane. The catalysed reaction is oxalate(in) + sulfate(out) = oxalate(out) + sulfate(in). It catalyses the reaction sulfate(out) + 2 chloride(in) = sulfate(in) + 2 chloride(out). It carries out the reaction oxalate(out) + 2 chloride(in) = oxalate(in) + 2 chloride(out). The enzyme catalyses bromide(in) + chloride(out) = bromide(out) + chloride(in). The catalysed reaction is nitrate(in) + chloride(out) = nitrate(out) + chloride(in). It catalyses the reaction iodide(in) + chloride(out) = iodide(out) + chloride(in). Its function is as follows. Sulfate transporter which mediates sulfate uptake into chondrocytes in order to maintain adequate sulfation of proteoglycans which is needed for cartilage development. Mediates electroneutral anion exchange of sulfate ions for oxalate ions, sulfate and oxalate ions for chloride and/or hydroxyl ions and chloride ions for bromide, iodide and nitrate ions. The coupling of sulfate transport to both hydroxyl and chloride ions likely serves to ensure transport at both acidic pH when most sulfate uptake is mediated by sulfate-hydroxide exchange and alkaline pH when most sulfate uptake is mediated by sulfate-chloride exchange. Essential for chondrocyte proliferation, differentiation and cell size expansion. This chain is Sulfate transporter (SLC26A2), found in Equus caballus (Horse).